Here is a 742-residue protein sequence, read N- to C-terminus: Ectonucleotide pyrophosphatase/phosphodiesterase 1 (742 aa).

The Cytoplasmic portion of the chain corresponds to 1–113 (MELQNDLESL…TGFHSKVPFK (113 aa)). A helical membrane pass occupies residues 114 to 134 (IIFRTLFGSLVFAIFLILMIN). Residues 135–742 (IAKPHHSTRV…SIDDLVDSDT (608 aa)) lie on the Extracellular side of the membrane. N-linked (GlcNAc...) asparagine glycans are attached at residues asparagine 161 and asparagine 204. The phosphodiesterase stretch occupies residues 168-545 (PLTIVISLDG…VFTIGSHGYD (378 aa)). Threonine 219 functions as the Nucleophile in the catalytic mechanism. Residues asparagine 264, asparagine 296, and asparagine 403 are each glycosylated (N-linked (GlcNAc...) asparagine). A compositionally biased stretch (acidic residues) spans 640 to 659 (EETEQDNVDNDNDDNDDGNT). Disordered regions lie at residues 640–670 (EETE…SSSL) and 686–711 (TLLG…TAST). Low complexity predominate over residues 691 to 711 (TSPSSRSSSSSSIQASATAST).

It belongs to the nucleotide pyrophosphatase/phosphodiesterase family. Post-translationally, autophosphorylated as part of the catalytic cycle of phosphodiesterase/pyrophosphatase activity. In terms of processing, N-glycosylated.

It is found in the membrane. It carries out the reaction Hydrolytically removes 5'-nucleotides successively from the 3'-hydroxy termini of 3'-hydroxy-terminated oligonucleotides.. It catalyses the reaction a ribonucleoside 5'-triphosphate + H2O = a ribonucleoside 5'-phosphate + diphosphate + H(+). The catalysed reaction is a 2'-deoxyribonucleoside 5'-triphosphate + H2O = a 2'-deoxyribonucleoside 5'-phosphate + diphosphate + H(+). In terms of biological role, mediates extracellular nucleotide derived phosphate hydrolysis along with NPP2 and PHO5. This chain is Ectonucleotide pyrophosphatase/phosphodiesterase 1 (NPP1), found in Saccharomyces cerevisiae (strain ATCC 204508 / S288c) (Baker's yeast).